A 323-amino-acid polypeptide reads, in one-letter code: GTP 3',8-cyclase (323 aa).

The region spanning 5 to 228 is the Radical SAM core domain; that stretch reads GFGRKVDYLR…TVLRDTSSPA (224 aa). Arginine 14 lines the GTP pocket. Residues cysteine 21 and cysteine 25 each contribute to the [4Fe-4S] cluster site. Position 27 (tyrosine 27) interacts with S-adenosyl-L-methionine. Cysteine 28 contributes to the [4Fe-4S] cluster binding site. Arginine 64 provides a ligand contact to GTP. Glycine 68 is an S-adenosyl-L-methionine binding site. Threonine 95 is a GTP binding site. Serine 119 is a binding site for S-adenosyl-L-methionine. Position 155 (lysine 155) interacts with GTP. Methionine 189 contributes to the S-adenosyl-L-methionine binding site. Cysteine 250 and cysteine 253 together coordinate [4Fe-4S] cluster. 255–257 lines the GTP pocket; it reads RIR. [4Fe-4S] cluster is bound at residue cysteine 267. Over residues 302–313 the composition is skewed to basic and acidic residues; that stretch reads KNKWSQKDDNEV. Residues 302–323 form a disordered region; the sequence is KNKWSQKDDNEVSTRAFYQTGG.

The protein belongs to the radical SAM superfamily. MoaA family. Monomer and homodimer. Requires [4Fe-4S] cluster as cofactor.

It carries out the reaction GTP + AH2 + S-adenosyl-L-methionine = (8S)-3',8-cyclo-7,8-dihydroguanosine 5'-triphosphate + 5'-deoxyadenosine + L-methionine + A + H(+). It participates in cofactor biosynthesis; molybdopterin biosynthesis. Functionally, catalyzes the cyclization of GTP to (8S)-3',8-cyclo-7,8-dihydroguanosine 5'-triphosphate. The chain is GTP 3',8-cyclase from Aliarcobacter butzleri (strain RM4018) (Arcobacter butzleri).